Here is a 342-residue protein sequence, read N- to C-terminus: Zinc transporter ZIP11 (342 aa).

The next 7 membrane-spanning stretches (helical) occupy residues 12–32, 44–64, 72–92, 194–214, 263–285, 290–307, and 322–342; these read LLGT…VFIF, LGFA…APAV, GFGA…AAFV, IALL…AVGV, FWYG…FAVV, ILPY…YVVM, and LASW…VGLG.

This sequence belongs to the ZIP transporter (TC 2.A.5) family. Highly expressed in the testes and portions of the digestive system including the stomach, ileum and cecum. In contrast, expressed at very low levels in liver, duodenum, jejunum, and colon.

It is found in the cell membrane. It localises to the nucleus. The protein localises to the cytoplasm. Its subcellular location is the golgi apparatus. It catalyses the reaction Zn(2+)(in) = Zn(2+)(out). The catalysed reaction is Cu(2+)(in) = Cu(2+)(out). Zinc importer that regulates cytosolic zinc concentration either via zinc influx from the extracellular compartment or efflux from intracellular organelles such as Golgi apparatus. May transport copper ions as well. The transport mechanism remains to be elucidated. The sequence is that of Zinc transporter ZIP11 (Slc39a11) from Mus musculus (Mouse).